Reading from the N-terminus, the 292-residue chain is Putative xanthine dehydrogenase FAD-binding subunit XdhB (292 aa).

The FAD-binding PCMH-type domain occupies 1 to 176 (MFDFASYHRA…VAFHFPPQPK (176 aa)). Residues 27 to 34 (KLLAGGTD), 109 to 113 (ATYGG), Ile165, and Phe184 contribute to the FAD site.

Heterotrimer of XdhA, XdhB and XdhC. FAD is required as a cofactor.

It carries out the reaction xanthine + NAD(+) + H2O = urate + NADH + H(+). The catalysed reaction is hypoxanthine + NAD(+) + H2O = xanthine + NADH + H(+). It participates in purine metabolism; hypoxanthine degradation; urate from hypoxanthine: step 1/2. It functions in the pathway purine metabolism; hypoxanthine degradation; urate from hypoxanthine: step 2/2. Presumed to be a dehydrogenase, but possibly an oxidase. Participates in limited purine salvage (requires aspartate) but does not support aerobic growth on purines as the sole carbon source (purine catabolism). The polypeptide is Putative xanthine dehydrogenase FAD-binding subunit XdhB (xdhB) (Escherichia coli (strain K12)).